We begin with the raw amino-acid sequence, 328 residues long: 4-hydroxy-3-methylbut-2-enyl diphosphate reductase (328 aa).

Position 24 (Cys-24) interacts with [4Fe-4S] cluster. (2E)-4-hydroxy-3-methylbut-2-enyl diphosphate-binding residues include His-55 and His-88. Positions 55 and 88 each coordinate dimethylallyl diphosphate. 2 residues coordinate isopentenyl diphosphate: His-55 and His-88. Cys-110 contacts [4Fe-4S] cluster. His-138 is a (2E)-4-hydroxy-3-methylbut-2-enyl diphosphate binding site. His-138 is a binding site for dimethylallyl diphosphate. His-138 is an isopentenyl diphosphate binding site. Glu-140 acts as the Proton donor in catalysis. Residue Thr-178 coordinates (2E)-4-hydroxy-3-methylbut-2-enyl diphosphate. Residue Cys-208 coordinates [4Fe-4S] cluster. Ser-236, Ser-237, Asn-238, and Ser-279 together coordinate (2E)-4-hydroxy-3-methylbut-2-enyl diphosphate. Dimethylallyl diphosphate contacts are provided by Ser-236, Ser-237, Asn-238, and Ser-279. Ser-236, Ser-237, Asn-238, and Ser-279 together coordinate isopentenyl diphosphate.

Belongs to the IspH family. It depends on [4Fe-4S] cluster as a cofactor.

It catalyses the reaction isopentenyl diphosphate + 2 oxidized [2Fe-2S]-[ferredoxin] + H2O = (2E)-4-hydroxy-3-methylbut-2-enyl diphosphate + 2 reduced [2Fe-2S]-[ferredoxin] + 2 H(+). The catalysed reaction is dimethylallyl diphosphate + 2 oxidized [2Fe-2S]-[ferredoxin] + H2O = (2E)-4-hydroxy-3-methylbut-2-enyl diphosphate + 2 reduced [2Fe-2S]-[ferredoxin] + 2 H(+). It functions in the pathway isoprenoid biosynthesis; dimethylallyl diphosphate biosynthesis; dimethylallyl diphosphate from (2E)-4-hydroxy-3-methylbutenyl diphosphate: step 1/1. Its pathway is isoprenoid biosynthesis; isopentenyl diphosphate biosynthesis via DXP pathway; isopentenyl diphosphate from 1-deoxy-D-xylulose 5-phosphate: step 6/6. Functionally, catalyzes the conversion of 1-hydroxy-2-methyl-2-(E)-butenyl 4-diphosphate (HMBPP) into a mixture of isopentenyl diphosphate (IPP) and dimethylallyl diphosphate (DMAPP). Acts in the terminal step of the DOXP/MEP pathway for isoprenoid precursor biosynthesis. The polypeptide is 4-hydroxy-3-methylbut-2-enyl diphosphate reductase (Ehrlichia ruminantium (strain Gardel)).